Here is a 504-residue protein sequence, read N- to C-terminus: ATP synthase subunit alpha (504 aa).

169–176 (GDRQTGKT) lines the ATP pocket.

The protein belongs to the ATPase alpha/beta chains family. As to quaternary structure, F-type ATPases have 2 components, CF(1) - the catalytic core - and CF(0) - the membrane proton channel. CF(1) has five subunits: alpha(3), beta(3), gamma(1), delta(1), epsilon(1). CF(0) has three main subunits: a(1), b(2) and c(9-12). The alpha and beta chains form an alternating ring which encloses part of the gamma chain. CF(1) is attached to CF(0) by a central stalk formed by the gamma and epsilon chains, while a peripheral stalk is formed by the delta and b chains.

Its subcellular location is the cell membrane. The enzyme catalyses ATP + H2O + 4 H(+)(in) = ADP + phosphate + 5 H(+)(out). Functionally, produces ATP from ADP in the presence of a proton gradient across the membrane. The alpha chain is a regulatory subunit. This chain is ATP synthase subunit alpha, found in Clostridium kluyveri (strain NBRC 12016).